A 317-amino-acid polypeptide reads, in one-letter code: Adenine deaminase (317 aa).

3 residues coordinate Zn(2+): His-14, His-16, and His-194. The Proton donor role is filled by Glu-197. Asp-275 is a binding site for Zn(2+). Position 276 (Asp-276) interacts with substrate.

The protein belongs to the metallo-dependent hydrolases superfamily. Adenosine and AMP deaminases family. Adenine deaminase type 2 subfamily. Requires Zn(2+) as cofactor.

It catalyses the reaction adenine + H2O + H(+) = hypoxanthine + NH4(+). Functionally, catalyzes the hydrolytic deamination of adenine to hypoxanthine. Plays an important role in the purine salvage pathway and in nitrogen catabolism. This is Adenine deaminase from Pseudomonas fluorescens (strain Pf0-1).